A 276-amino-acid chain; its full sequence is Neuroendocrine protein 7B2 (276 aa).

Cys-155 and Cys-168 are oxidised to a cystine.

The protein belongs to the 7B2 family. In terms of assembly, interacts with amon/PC2 early in the secretory pathway. Dissociation occurs at later stages.

It is found in the secreted. Acts as a molecular chaperone for neuroendocrine convertase amon/PC2, preventing its premature activation in the regulated secretory pathway. Binds to inactive amon in the endoplasmic reticulum and facilitates its transport from there to later compartments of the secretory pathway where it is proteolytically matured and activated. Also required for cleavage of amon. In Drosophila melanogaster (Fruit fly), this protein is Neuroendocrine protein 7B2.